The chain runs to 1250 residues: Ras-associated and pleckstrin homology domains-containing protein 1 (1250 aa).

An N-acetylmethionine modification is found at Met1. Acidic residues predominate over residues 1 to 23 (MEQLSDEEIDHGAEEDSDKEDQD). A disordered region spans residues 1-26 (MEQLSDEEIDHGAEEDSDKEDQDLDK). Phosphoserine is present on residues Ser5, Ser17, Ser54, Ser150, Ser192, Ser203, and Ser205. Positions 179–217 (TKPLVTNQHRRTASAGTVSDAEVHSISNSSHSSITSAAS) are disordered. Positions 202–217 (HSISNSSHSSITSAAS) are enriched in low complexity. Positions 269 to 355 (KKLVIRVHMS…NKLIFMERIE (87 aa)) constitute a Ras-associating domain. One can recognise a PH domain in the interval 396-505 (VPEIEGVLWL…WVNGIRIAKY (110 aa)). Tyr426 and Tyr456 each carry phosphotyrosine; by ABL1. Positions 535 to 551 (KSGSSSSSIPESQSNHS) are enriched in low complexity. Disordered stretches follow at residues 535–570 (KSGS…VRSQ), 588–663 (EESS…AAPM), 675–1036 (NASQ…SGVN), 1050–1162 (APVL…LSVQ), and 1176–1250 (KSIT…SRDW). The span at 552 to 570 (NQSDSGVSDTQPAGHVRSQ) shows a compositional bias: polar residues. Positions 588 to 597 (EESSKARMES) are enriched in basic and acidic residues. A Phosphoserine modification is found at Ser610. Residues 624-650 (PSPPLPPPPPPPPPPPPPPPPPPPPLP) show a composition bias toward pro residues. Positions 651-662 (SQSAPSAGSAAP) are enriched in low complexity. Pro residues-rich tracts occupy residues 707–721 (GVVP…PPTP) and 760–781 (PPTP…PPKP). Over residues 791–802 (TKTVAPVVTQAA) the composition is skewed to low complexity. Pro residues-rich tracts occupy residues 803-814 (PPTPTPPVPPAK) and 823-840 (YIPP…PPTL). Ser827 bears the Phosphoserine mark. Thr830 carries the phosphothreonine modification. Phosphoserine is present on residues Ser845, Ser853, and Ser894. The span at 909-947 (IPVPSPDFPPPPPESSLVFPPPPPSPVPAPPPPPPPTAS) shows a compositional bias: pro residues. A compositionally biased stretch (low complexity) spans 948–968 (PTPDKSGSPGKKTSKTSSPGG). Ser965 is subject to Phosphoserine. Thr974 bears the Phosphothreonine mark. The span at 976–986 (QRNSSIKSSSG) shows a compositional bias: polar residues. Phosphoserine occurs at positions 996 and 1012. 2 stretches are compositionally biased toward pro residues: residues 1018–1027 (LPPPAAPPKP) and 1065–1088 (PSPP…PPIE). Composition is skewed to polar residues over residues 1131–1144 (TRLT…QPTM) and 1151–1161 (VPTSPKSSLSV). At Ser1183 the chain carries Phosphoserine. Tyr1226 is subject to Phosphotyrosine; by ABL1. Over residues 1238–1250 (PKRDQNTKLSRDW) the composition is skewed to basic and acidic residues.

It belongs to the MRL family. In terms of assembly, interacts with EVL and VASP and targets them to the leading edge. Interacts (via Ras associating and PH domains) with RAC1. In terms of tissue distribution, isoform RMO1-RAPH1 is ubiquitously expressed with highest levels in brain, heart, ovary and developing embryo. Isoform RMO1 is widely expressed with highest levels in liver. Low expression in B-cells.

The protein resides in the cell membrane. The protein localises to the cell projection. It is found in the lamellipodium. It localises to the filopodium. Its subcellular location is the cytoplasm. The protein resides in the cytoskeleton. Mediator of localized membrane signals. Implicated in the regulation of lamellipodial dynamics. Negatively regulates cell adhesion. The sequence is that of Ras-associated and pleckstrin homology domains-containing protein 1 (RAPH1) from Homo sapiens (Human).